A 332-amino-acid chain; its full sequence is MERIISELEMPNEIEIQKSLRPKSFDEYIGQENLKEKMSISIKAAQKRNMVVDHILLYGPPGLGKTTLAGVIANEMKANLKITSGPILEKAGDLAAILTSLEENDILFIDEIHRLNSTVEEILYPAMEDGELDIIIGKGPSAKSIRIELPPFTLIGATTRAGLLSAPLRDRFGVSHKMEYYNENEIKSIIIRGAKILGVKINEDGAIEISKRSRGTPRIANRLLKRVRDYCEIKGNGTIDKLSAKNALDMLGVDSNGLDDLDRNIINSIIENYDGGPVGIETLSLLLGEDRRTLEEVYEPYLVKIGFLKRTNRGRVVTSKAYQHFKKVEVKI.

The interval 1-181 (MERIISELEM…FGVSHKMEYY (181 aa)) is large ATPase domain (RuvB-L). The ATP site is built by Leu20, Arg21, Gly62, Lys65, Thr66, Thr67, Arg171, Tyr181, and Arg218. Thr66 lines the Mg(2+) pocket. The small ATPAse domain (RuvB-S) stretch occupies residues 182-252 (NENEIKSIII…SAKNALDMLG (71 aa)). The segment at 255–332 (SNGLDDLDRN…QHFKKVEVKI (78 aa)) is head domain (RuvB-H). Arg291, Arg310, and Arg315 together coordinate DNA.

The protein belongs to the RuvB family. Homohexamer. Forms an RuvA(8)-RuvB(12)-Holliday junction (HJ) complex. HJ DNA is sandwiched between 2 RuvA tetramers; dsDNA enters through RuvA and exits via RuvB. An RuvB hexamer assembles on each DNA strand where it exits the tetramer. Each RuvB hexamer is contacted by two RuvA subunits (via domain III) on 2 adjacent RuvB subunits; this complex drives branch migration. In the full resolvosome a probable DNA-RuvA(4)-RuvB(12)-RuvC(2) complex forms which resolves the HJ.

It is found in the cytoplasm. It carries out the reaction ATP + H2O = ADP + phosphate + H(+). The RuvA-RuvB-RuvC complex processes Holliday junction (HJ) DNA during genetic recombination and DNA repair, while the RuvA-RuvB complex plays an important role in the rescue of blocked DNA replication forks via replication fork reversal (RFR). RuvA specifically binds to HJ cruciform DNA, conferring on it an open structure. The RuvB hexamer acts as an ATP-dependent pump, pulling dsDNA into and through the RuvAB complex. RuvB forms 2 homohexamers on either side of HJ DNA bound by 1 or 2 RuvA tetramers; 4 subunits per hexamer contact DNA at a time. Coordinated motions by a converter formed by DNA-disengaged RuvB subunits stimulates ATP hydrolysis and nucleotide exchange. Immobilization of the converter enables RuvB to convert the ATP-contained energy into a lever motion, pulling 2 nucleotides of DNA out of the RuvA tetramer per ATP hydrolyzed, thus driving DNA branch migration. The RuvB motors rotate together with the DNA substrate, which together with the progressing nucleotide cycle form the mechanistic basis for DNA recombination by continuous HJ branch migration. Branch migration allows RuvC to scan DNA until it finds its consensus sequence, where it cleaves and resolves cruciform DNA. The protein is Holliday junction branch migration complex subunit RuvB of Fusobacterium nucleatum subsp. nucleatum (strain ATCC 25586 / DSM 15643 / BCRC 10681 / CIP 101130 / JCM 8532 / KCTC 2640 / LMG 13131 / VPI 4355).